A 538-amino-acid polypeptide reads, in one-letter code: CWF19-like protein 1 (538 aa).

The disordered stretch occupies residues 298 to 324 (QGRKRSSTGRDSKSSPHPKQPRKPPQP).

Belongs to the CWF19 family. In terms of tissue distribution, expressed in many brain regions, including cerebellum, thalamus and occipital, parietal and temporal lobes (at protein level). Also expressed in the spinal cord (at protein level).

The protein is CWF19-like protein 1 (CWF19L1) of Homo sapiens (Human).